Consider the following 255-residue polypeptide: 1-(5-phosphoribosyl)-5-[(5-phosphoribosylamino)methylideneamino] imidazole-4-carboxamide isomerase (255 aa).

The Proton acceptor role is filled by D8. D129 functions as the Proton donor in the catalytic mechanism.

The protein belongs to the HisA/HisF family.

The protein resides in the cytoplasm. The enzyme catalyses 1-(5-phospho-beta-D-ribosyl)-5-[(5-phospho-beta-D-ribosylamino)methylideneamino]imidazole-4-carboxamide = 5-[(5-phospho-1-deoxy-D-ribulos-1-ylimino)methylamino]-1-(5-phospho-beta-D-ribosyl)imidazole-4-carboxamide. The protein operates within amino-acid biosynthesis; L-histidine biosynthesis; L-histidine from 5-phospho-alpha-D-ribose 1-diphosphate: step 4/9. The polypeptide is 1-(5-phosphoribosyl)-5-[(5-phosphoribosylamino)methylideneamino] imidazole-4-carboxamide isomerase (Synechococcus sp. (strain CC9902)).